Here is a 272-residue protein sequence, read N- to C-terminus: Large ribosomal subunit protein uL29m (272 aa).

3 disordered regions span residues 1 to 29, 56 to 87, and 227 to 272; these read MAAAAMRPSMGALGRISSSTPSPLRPLTQ, KHRGESAIHRSGTRWRLSMSDEPLPRPVPRNK, and AAAT…TPRL. Positions 17-29 are enriched in low complexity; sequence SSSTPSPLRPLTQ. Low complexity-rich tracts occupy residues 227-238 and 249-259; these read AAATEGEQQAAE and PATAATPESAT. Polar residues predominate over residues 260–272; sequence IPSSQQQTDTPRL.

Belongs to the universal ribosomal protein uL29 family. As to quaternary structure, component of the mitochondrial large ribosomal subunit. Mature mitochondrial ribosomes consist of a small (37S) and a large (54S) subunit. The 37S subunit contains at least 33 different proteins and 1 molecule of RNA (15S). The 54S subunit contains at least 45 different proteins and 1 molecule of RNA (21S).

Its subcellular location is the mitochondrion. The sequence is that of Large ribosomal subunit protein uL29m (MRPL4) from Chaetomium globosum (strain ATCC 6205 / CBS 148.51 / DSM 1962 / NBRC 6347 / NRRL 1970) (Soil fungus).